The primary structure comprises 187 residues: Large ribosomal subunit protein bL25 (187 aa).

The protein belongs to the bacterial ribosomal protein bL25 family. CTC subfamily. Part of the 50S ribosomal subunit; part of the 5S rRNA/L5/L18/L25 subcomplex. Contacts the 5S rRNA. Binds to the 5S rRNA independently of L5 and L18.

In terms of biological role, this is one of the proteins that binds to the 5S RNA in the ribosome where it forms part of the central protuberance. The sequence is that of Large ribosomal subunit protein bL25 from Tropheryma whipplei (strain Twist) (Whipple's bacillus).